The chain runs to 78 residues: Large ribosomal subunit protein bL28 (78 aa).

The segment at 1–28 (MSRRCQVRGTKPEFGNNVSHSQRHTKRR) is disordered.

The protein belongs to the bacterial ribosomal protein bL28 family.

The polypeptide is Large ribosomal subunit protein bL28 (Cutibacterium acnes (strain DSM 16379 / KPA171202) (Propionibacterium acnes)).